We begin with the raw amino-acid sequence, 68 residues long: UPF0291 protein TTE2340 (68 aa).

This sequence belongs to the UPF0291 family.

It localises to the cytoplasm. In Caldanaerobacter subterraneus subsp. tengcongensis (strain DSM 15242 / JCM 11007 / NBRC 100824 / MB4) (Thermoanaerobacter tengcongensis), this protein is UPF0291 protein TTE2340.